A 220-amino-acid chain; its full sequence is Fructose-6-phosphate aldolase 2 (220 aa).

Lysine 85 functions as the Schiff-base intermediate with substrate in the catalytic mechanism.

This sequence belongs to the transaldolase family. Type 3A subfamily. In terms of assembly, homodecamer.

It is found in the cytoplasm. The enzyme catalyses beta-D-fructose 6-phosphate = dihydroxyacetone + D-glyceraldehyde 3-phosphate. Catalyzes the reversible formation of fructose 6-phosphate from dihydroxyacetone and D-glyceraldehyde 3-phosphate via an aldolization reaction. The protein is Fructose-6-phosphate aldolase 2 (fsaB) of Escherichia coli O6:H1 (strain CFT073 / ATCC 700928 / UPEC).